A 485-amino-acid chain; its full sequence is UDP-N-acetylmuramate--L-alanine ligase (485 aa).

Residue 127–133 (GTHGKTT) participates in ATP binding.

This sequence belongs to the MurCDEF family.

The protein localises to the cytoplasm. The enzyme catalyses UDP-N-acetyl-alpha-D-muramate + L-alanine + ATP = UDP-N-acetyl-alpha-D-muramoyl-L-alanine + ADP + phosphate + H(+). It functions in the pathway cell wall biogenesis; peptidoglycan biosynthesis. In terms of biological role, cell wall formation. This is UDP-N-acetylmuramate--L-alanine ligase from Shewanella frigidimarina (strain NCIMB 400).